The following is a 130-amino-acid chain: Small ribosomal subunit protein uS11c (130 aa).

Belongs to the universal ribosomal protein uS11 family. Part of the 30S ribosomal subunit.

The protein resides in the plastid. It localises to the chloroplast. The sequence is that of Small ribosomal subunit protein uS11c from Marsilea quadrifolia (European water clover).